A 144-amino-acid chain; its full sequence is MTINLIAVGKLEKDFQKLFDEYAKRIFVFSKFNLIEIKENTLKNLEVKKEKETLEILSKIPKNSTVFLLSIKGKNYSSEEFSKLITNDANITFVIGGSNGVIESYFENKISFSKLTFPHQLFRVILIEQIYRAFTIKNNLKYHK.

Residues Leu68, Gly96, and 112–117 (FSKLTF) contribute to the S-adenosyl-L-methionine site.

The protein belongs to the RNA methyltransferase RlmH family. As to quaternary structure, homodimer.

It is found in the cytoplasm. It catalyses the reaction pseudouridine(1915) in 23S rRNA + S-adenosyl-L-methionine = N(3)-methylpseudouridine(1915) in 23S rRNA + S-adenosyl-L-homocysteine + H(+). Functionally, specifically methylates the pseudouridine at position 1915 (m3Psi1915) in 23S rRNA. This chain is Ribosomal RNA large subunit methyltransferase H, found in Mycoplasmopsis synoviae (strain 53) (Mycoplasma synoviae).